Here is a 75-residue protein sequence, read N- to C-terminus: Large ribosomal subunit protein eL14 (75 aa).

Belongs to the eukaryotic ribosomal protein eL14 family.

This Methanothermobacter thermautotrophicus (strain ATCC 29096 / DSM 1053 / JCM 10044 / NBRC 100330 / Delta H) (Methanobacterium thermoautotrophicum) protein is Large ribosomal subunit protein eL14.